Consider the following 299-residue polypeptide: tRNA dimethylallyltransferase (299 aa).

ATP is bound at residue 13 to 20 (GATASGKT). 15 to 20 (TASGKT) contacts substrate. An interaction with substrate tRNA region spans residues 38–41 (DSRQ).

This sequence belongs to the IPP transferase family. As to quaternary structure, monomer. Mg(2+) is required as a cofactor.

The catalysed reaction is adenosine(37) in tRNA + dimethylallyl diphosphate = N(6)-dimethylallyladenosine(37) in tRNA + diphosphate. In terms of biological role, catalyzes the transfer of a dimethylallyl group onto the adenine at position 37 in tRNAs that read codons beginning with uridine, leading to the formation of N6-(dimethylallyl)adenosine (i(6)A). The protein is tRNA dimethylallyltransferase of Prochlorococcus marinus (strain MIT 9312).